Here is a 158-residue protein sequence, read N- to C-terminus: Small ribosomal subunit protein uS7 (158 aa).

This sequence belongs to the universal ribosomal protein uS7 family. As to quaternary structure, part of the 30S ribosomal subunit. Contacts proteins S9 and S11.

In terms of biological role, one of the primary rRNA binding proteins, it binds directly to 16S rRNA where it nucleates assembly of the head domain of the 30S subunit. Is located at the subunit interface close to the decoding center, probably blocks exit of the E-site tRNA. The polypeptide is Small ribosomal subunit protein uS7 (Christiangramia forsetii (strain DSM 17595 / CGMCC 1.15422 / KT0803) (Gramella forsetii)).